A 132-amino-acid polypeptide reads, in one-letter code: Pro-MCH 1 (132 aa).

A signal peptide spans M1–A24. The cysteines at positions 120 and 129 are disulfide-linked.

It belongs to the melanin-concentrating hormone family. In terms of tissue distribution, pituitary gland. Produced in neurons of lateral basal hypothalamus which project both to the brain and to the neural lobe of the pituitary gland from where MCH is released.

Functionally, plays a role in skin pigmentation by antagonizing the action of melanotropin alpha. Induces melanin concentration within the melanophores. May participate in the control of the hypothalamo-pituitary adrenal gland axis by inhibiting the release of ACTH. The sequence is that of Pro-MCH 1 (mch1) from Oncorhynchus keta (Chum salmon).